The following is a 226-amino-acid chain: Orotidine 5'-phosphate decarboxylase (226 aa).

Residues Asp-8, Lys-30, 58–67, Thr-117, Arg-177, Gln-186, Gly-206, and Arg-207 each bind substrate; that span reads DLKIHDIPNT. Residue Lys-60 is the Proton donor of the active site.

Belongs to the OMP decarboxylase family. Type 1 subfamily. In terms of assembly, homodimer.

It carries out the reaction orotidine 5'-phosphate + H(+) = UMP + CO2. The protein operates within pyrimidine metabolism; UMP biosynthesis via de novo pathway; UMP from orotate: step 2/2. Its function is as follows. Catalyzes the decarboxylation of orotidine 5'-monophosphate (OMP) to uridine 5'-monophosphate (UMP). This Campylobacter jejuni subsp. doylei (strain ATCC BAA-1458 / RM4099 / 269.97) protein is Orotidine 5'-phosphate decarboxylase.